A 122-amino-acid chain; its full sequence is Large ribosomal subunit protein uL14 (122 aa).

The protein belongs to the universal ribosomal protein uL14 family. In terms of assembly, part of the 50S ribosomal subunit. Forms a cluster with proteins L3 and L19. In the 70S ribosome, L14 and L19 interact and together make contacts with the 16S rRNA in bridges B5 and B8.

Functionally, binds to 23S rRNA. Forms part of two intersubunit bridges in the 70S ribosome. This is Large ribosomal subunit protein uL14 from Burkholderia lata (strain ATCC 17760 / DSM 23089 / LMG 22485 / NCIMB 9086 / R18194 / 383).